Consider the following 56-residue polypeptide: Large ribosomal subunit protein bL33 (56 aa).

This sequence belongs to the bacterial ribosomal protein bL33 family.

The sequence is that of Large ribosomal subunit protein bL33 from Rickettsia africae (strain ESF-5).